A 158-amino-acid chain; its full sequence is Pathogenesis-related protein 1 (158 aa).

Belongs to the BetVI family.

Its subcellular location is the cytoplasm. This is Pathogenesis-related protein 1 (PR1) from Asparagus officinalis (Garden asparagus).